Reading from the N-terminus, the 311-residue chain is Pyrimidine-specific ribonucleoside hydrolase RihA (311 aa).

His-240 is an active-site residue.

Belongs to the IUNH family. RihA subfamily.

Functionally, hydrolyzes cytidine or uridine to ribose and cytosine or uracil, respectively. The sequence is that of Pyrimidine-specific ribonucleoside hydrolase RihA from Salmonella typhimurium (strain LT2 / SGSC1412 / ATCC 700720).